A 40-amino-acid polypeptide reads, in one-letter code: uncharacterized protein (40 aa).

This is an uncharacterized protein from Saccharomyces cerevisiae (strain ATCC 204508 / S288c) (Baker's yeast).